The chain runs to 147 residues: Two-component response regulator ORR11 (147 aa).

The region spanning His29–Leu146 is the Response regulatory domain. Position 79 is a 4-aspartylphosphate (Asp79).

It belongs to the ARR family. Type-A subfamily. Two-component system major event consists of a His-to-Asp phosphorelay between a sensor histidine kinase (HK) and a response regulator (RR). In plants, the His-to-Asp phosphorelay involves an additional intermediate named Histidine-containing phosphotransfer protein (HPt). This multistep phosphorelay consists of a His-Asp-His-Asp sequential transfer of a phosphate group between first a His and an Asp of the HK protein, followed by the transfer to a conserved His of the HPt protein and finally the transfer to an Asp in the receiver domain of the RR protein.

Its function is as follows. Functions as a response regulator involved in His-to-Asp phosphorelay signal transduction system. Phosphorylation of the Asp residue in the receiver domain activates the ability of the protein to promote the transcription of target genes. Type-A response regulators seem to act as negative regulators of the cytokinin signaling. This is Two-component response regulator ORR11 from Oryza sativa subsp. indica (Rice).